The following is a 398-amino-acid chain: MSKTIAINAGSSSLKWQLYQMPEEEVLAQGIIERIGLKDSISTVKYDGKKEEQILDIHDHTEAVKILLNDLIHFGIIAAYDEITGVGHRVVAGGELFKESVVVNDKVLEQIEELSVLAPLHNPGAAAGIRAFRDILPDITSVCVFDTSFHTSMAKHTYLYPIPQKYYTDYKVRKYGAHGTSHKYVAQEAAKMLGRPLEELKLITAHIGNGVSITANYHGKSVDTSMGFTPLAGPMMGTRSGDIDPAIIPYLIEQDPELKDAADVVNMLNKKSGLSGVSGISSDMRDIEAGLQEDNPDAVLAYNIFIDRIKKCIGQYFAVLNGADALVFTAGMGENAPLMRQDVIGGLTWFGMDIDPEKNVFGYRGEISTPESKVKVLVISTDEELCIARDVERLKNTK.

Asn-8 contacts Mg(2+). Position 15 (Lys-15) interacts with ATP. Arg-89 is a substrate binding site. Asp-146 functions as the Proton donor/acceptor in the catalytic mechanism. Residues 206 to 210 (HIGNG), 283 to 285 (DMR), and 331 to 335 (GMGEN) each bind ATP. Residue Glu-383 coordinates Mg(2+).

Belongs to the acetokinase family. Homodimer. Mg(2+) serves as cofactor. Mn(2+) is required as a cofactor.

It is found in the cytoplasm. The catalysed reaction is acetate + ATP = acetyl phosphate + ADP. Its pathway is metabolic intermediate biosynthesis; acetyl-CoA biosynthesis; acetyl-CoA from acetate: step 1/2. Functionally, catalyzes the formation of acetyl phosphate from acetate and ATP. Can also catalyze the reverse reaction. The protein is Acetate kinase of Streptococcus pyogenes serotype M28 (strain MGAS6180).